A 118-amino-acid polypeptide reads, in one-letter code: Large ribosomal subunit protein uL18 (118 aa).

The protein belongs to the universal ribosomal protein uL18 family. As to quaternary structure, part of the 50S ribosomal subunit; part of the 5S rRNA/L5/L18/L25 subcomplex. Contacts the 5S and 23S rRNAs.

This is one of the proteins that bind and probably mediate the attachment of the 5S RNA into the large ribosomal subunit, where it forms part of the central protuberance. The protein is Large ribosomal subunit protein uL18 of Limosilactobacillus reuteri (strain DSM 20016) (Lactobacillus reuteri).